The primary structure comprises 478 residues: Calcium/calmodulin-dependent protein kinase type II subunit alpha (478 aa).

Tyr13 is subject to Phosphotyrosine. A Protein kinase domain is found at 13–271; it reads YQLFEELGKG…AAEALKHPWI (259 aa). ATP is bound by residues 19–27 and Lys42; that span reads LGKGAFSVV. Asp135 acts as the Proton acceptor in catalysis. At Ser257 the chain carries Phosphoserine. A Phosphothreonine; by autocatalysis modification is found at Thr286. Residues 290 to 300 are calmodulin-binding; that stretch reads LKKFNARRKLK. Residues 310–320 are interaction with BAALC; that stretch reads TRNFSGGKSGG. The interval 314–341 is disordered; sequence SGGKSGGNKKSDGVKESSESTNTTIEDE. Basic and acidic residues predominate over residues 322–331; the sequence is KKSDGVKESS. Ser330, Ser331, and Ser333 each carry phosphoserine. 2 positions are modified to phosphothreonine: Thr336 and Thr337. The residue at position 404 (Ser404) is a Phosphoserine.

This sequence belongs to the protein kinase superfamily. CAMK Ser/Thr protein kinase family. CaMK subfamily. There are 4 genes encoding calcium/calmodulin-dependent protein kinase type II chains: CAMK2A, CAMK2B, CAMK2G and CAMK2D. The corresponding proteins assemble into homo- or heteromultimeric holoenzymes composed of 12 subunits with two hexameric rings stacked one on top of the other. Interacts with BAALC. Interacts with MPDZ. Interacts with SYN1. Interacts with CAMK2N2. Interacts with SYNGAP1. Interacts with SYNPO2. Interacts with SHANK3. Interacts with GRIN2B. Interacts with CACNB2. Interacts with LRRC7. Interacts with GRM5. Interacts with DAGLA (via C-terminal); this interaction is enhanced by autophosphorylation of CAMK2A at Thr-286. Interacts with CAMK2N1; this interaction requires CAMK2A activation by Ca(2+). Mg(2+) serves as cofactor. Post-translationally, autophosphorylation of Thr-286 following activation by Ca(2+)/calmodulin. Phosphorylation of Thr-286 locks the kinase into an activated state. In terms of processing, palmitoylated. Probably palmitoylated by ZDHHC3 and ZDHHC7.

The protein resides in the synapse. Its subcellular location is the postsynaptic density. The protein localises to the cell projection. It localises to the dendritic spine. It is found in the dendrite. It catalyses the reaction L-seryl-[protein] + ATP = O-phospho-L-seryl-[protein] + ADP + H(+). It carries out the reaction L-threonyl-[protein] + ATP = O-phospho-L-threonyl-[protein] + ADP + H(+). Activated by Ca(2+)/calmodulin. Binding of calmodulin results in conformational change that relieves intrasteric autoinhibition and allows autophosphorylation of Thr-286 which turns the kinase in a constitutively active form and confers to the kinase a Ca(2+)-independent activity. Functionally, calcium/calmodulin-dependent protein kinase that functions autonomously after Ca(2+)/calmodulin-binding and autophosphorylation, and is involved in various processes, such as synaptic plasticity, neurotransmitter release and long-term potentiation. Member of the NMDAR signaling complex in excitatory synapses, it regulates NMDAR-dependent potentiation of the AMPAR and therefore excitatory synaptic transmission. Regulates dendritic spine development. Also regulates the migration of developing neurons. Phosphorylates the transcription factor FOXO3 to activate its transcriptional activity. Phosphorylates the transcription factor ETS1 in response to calcium signaling, thereby decreasing ETS1 affinity for DNA. In response to interferon-gamma (IFN-gamma) stimulation, catalyzes phosphorylation of STAT1, stimulating the JAK-STAT signaling pathway. In response to interferon-beta (IFN-beta) stimulation, stimulates the JAK-STAT signaling pathway. Acts as a negative regulator of 2-arachidonoylglycerol (2-AG)-mediated synaptic signaling via modulation of DAGLA activity. The sequence is that of Calcium/calmodulin-dependent protein kinase type II subunit alpha (CAMK2A) from Pongo abelii (Sumatran orangutan).